We begin with the raw amino-acid sequence, 694 residues long: DNA-directed RNA polymerase subunit beta' (694 aa).

4 residues coordinate Zn(2+): cysteine 69, cysteine 71, cysteine 87, and cysteine 90. Residues aspartate 489, aspartate 491, and aspartate 493 each contribute to the Mg(2+) site.

Belongs to the RNA polymerase beta' chain family. RpoC1 subfamily. As to quaternary structure, in plastids the minimal PEP RNA polymerase catalytic core is composed of four subunits: alpha, beta, beta', and beta''. When a (nuclear-encoded) sigma factor is associated with the core the holoenzyme is formed, which can initiate transcription. The cofactor is Mg(2+). Requires Zn(2+) as cofactor.

Its subcellular location is the plastid. The protein resides in the chloroplast. The catalysed reaction is RNA(n) + a ribonucleoside 5'-triphosphate = RNA(n+1) + diphosphate. In terms of biological role, DNA-dependent RNA polymerase catalyzes the transcription of DNA into RNA using the four ribonucleoside triphosphates as substrates. The polypeptide is DNA-directed RNA polymerase subunit beta' (Gossypium barbadense (Sea Island cotton)).